A 610-amino-acid chain; its full sequence is Lipoprotein LpqB (610 aa).

An N-terminal signal peptide occupies residues 1 to 27 (MGAEGGGRRRALRLGAYVGCGAVLLTG). C28 is lipidated: N-palmitoyl cysteine. Residue C28 is the site of S-diacylglycerol cysteine attachment.

It belongs to the LpqB lipoprotein family.

The protein localises to the cell membrane. This is Lipoprotein LpqB from Streptomyces avermitilis (strain ATCC 31267 / DSM 46492 / JCM 5070 / NBRC 14893 / NCIMB 12804 / NRRL 8165 / MA-4680).